The primary structure comprises 100 residues: MTIFNAVDKFTMMSGDRVKIKDLLSSRLTECGWRDEVRLLCRSILQEKGAISSFTVEQLVTEVTPRARSLVPDAVKKELLIKIRTIFDENEADDIDPEEA.

It belongs to the ENY2 family. As to quaternary structure, component of the nuclear pore complex (NPC)-associated AMEX complex (anchoring and mRNA export complex), composed of at least e(y)2 and xmas-2. Component of the SAGA transcription coactivator-HAT complexes, at least composed of Ada2b, e(y)2, Pcaf/Gcn5, Taf10 and Nipped-A/Trrap. Within the SAGA complex, e(y)2, Sgf11, and not/nonstop form an additional subcomplex of SAGA called the DUB module (deubiquitination module). Component of the THO complex, composed of at least e(y)2, HPR1, THO2, THOC5, THOC6 and THOC7. Interacts with e(y)1. Interacts with su(Hw) (via zinc fingers). Interacts with xmas-2; required for localization to the nuclear periphery. Interacts with the nuclear pore complex (NPC).

It is found in the nucleus. Its subcellular location is the nucleoplasm. It localises to the cytoplasm. Functionally, involved in mRNA export coupled transcription activation by association with both the AMEX and the SAGA complexes. The SAGA complex is a multiprotein complex that activates transcription by remodeling chromatin and mediating histone acetylation and deubiquitination. Within the SAGA complex, participates in a subcomplex that specifically deubiquitinates histone H2B. The SAGA complex is recruited to specific gene promoters by activators, where it is required for transcription. Required for nuclear receptor-mediated transactivation. Involved in transcription elongation by recruiting the THO complex onto nascent mRNA. The AMEX complex functions in docking export-competent ribonucleoprotein particles (mRNPs) to the nuclear entrance of the nuclear pore complex (nuclear basket). AMEX participates in mRNA export and accurate chromatin positioning in the nucleus by tethering genes to the nuclear periphery. This Drosophila pseudoobscura pseudoobscura (Fruit fly) protein is Enhancer of yellow 2 transcription factor.